A 453-amino-acid polypeptide reads, in one-letter code: Serine--tRNA ligase (453 aa).

249-251 (TSE) provides a ligand contact to L-serine. ATP contacts are provided by residues 280-282 (RKE) and V296. E303 contributes to the L-serine binding site. 367 to 370 (EMVS) contacts ATP. An L-serine-binding site is contributed by T404.

It belongs to the class-II aminoacyl-tRNA synthetase family. Type-1 seryl-tRNA synthetase subfamily. As to quaternary structure, homodimer. The tRNA molecule binds across the dimer.

The protein localises to the cytoplasm. It carries out the reaction tRNA(Ser) + L-serine + ATP = L-seryl-tRNA(Ser) + AMP + diphosphate + H(+). It catalyses the reaction tRNA(Sec) + L-serine + ATP = L-seryl-tRNA(Sec) + AMP + diphosphate + H(+). The protein operates within aminoacyl-tRNA biosynthesis; selenocysteinyl-tRNA(Sec) biosynthesis; L-seryl-tRNA(Sec) from L-serine and tRNA(Sec): step 1/1. Its function is as follows. Catalyzes the attachment of serine to tRNA(Ser). Is also able to aminoacylate tRNA(Sec) with serine, to form the misacylated tRNA L-seryl-tRNA(Sec), which will be further converted into selenocysteinyl-tRNA(Sec). This is Serine--tRNA ligase from Archaeoglobus fulgidus (strain ATCC 49558 / DSM 4304 / JCM 9628 / NBRC 100126 / VC-16).